We begin with the raw amino-acid sequence, 361 residues long: Phosphoserine aminotransferase (361 aa).

R43 serves as a coordination point for L-glutamate. Pyridoxal 5'-phosphate-binding positions include 77–78 (AS), W103, T153, D173, and Q196. Residue K197 is modified to N6-(pyridoxal phosphate)lysine. Pyridoxal 5'-phosphate is bound at residue 238–239 (NT).

The protein belongs to the class-V pyridoxal-phosphate-dependent aminotransferase family. SerC subfamily. In terms of assembly, homodimer. It depends on pyridoxal 5'-phosphate as a cofactor.

The protein localises to the cytoplasm. It carries out the reaction O-phospho-L-serine + 2-oxoglutarate = 3-phosphooxypyruvate + L-glutamate. It catalyses the reaction 4-(phosphooxy)-L-threonine + 2-oxoglutarate = (R)-3-hydroxy-2-oxo-4-phosphooxybutanoate + L-glutamate. Its pathway is amino-acid biosynthesis; L-serine biosynthesis; L-serine from 3-phospho-D-glycerate: step 2/3. It functions in the pathway cofactor biosynthesis; pyridoxine 5'-phosphate biosynthesis; pyridoxine 5'-phosphate from D-erythrose 4-phosphate: step 3/5. Catalyzes the reversible conversion of 3-phosphohydroxypyruvate to phosphoserine and of 3-hydroxy-2-oxo-4-phosphonooxybutanoate to phosphohydroxythreonine. The chain is Phosphoserine aminotransferase from Pseudomonas putida (strain ATCC 47054 / DSM 6125 / CFBP 8728 / NCIMB 11950 / KT2440).